A 149-amino-acid polypeptide reads, in one-letter code: 3-dehydroquinate dehydratase (149 aa).

The active-site Proton acceptor is the Tyr-23. Substrate-binding residues include Asn-75, His-81, and Asp-88. The active-site Proton donor is His-101. Substrate is bound by residues 102-103 (LS) and Arg-112.

Belongs to the type-II 3-dehydroquinase family. Homododecamer.

The enzyme catalyses 3-dehydroquinate = 3-dehydroshikimate + H2O. It participates in metabolic intermediate biosynthesis; chorismate biosynthesis; chorismate from D-erythrose 4-phosphate and phosphoenolpyruvate: step 3/7. Functionally, catalyzes a trans-dehydration via an enolate intermediate. The polypeptide is 3-dehydroquinate dehydratase (Stenotrophomonas maltophilia (strain R551-3)).